We begin with the raw amino-acid sequence, 677 residues long: Pescadillo homolog (677 aa).

Positions 359 to 468 constitute a BRCT domain; sequence TFYISREAPK…KLLRPDLYAP (110 aa). A disordered region spans residues 472-677; it reads LPPHLSPWVN…RKIEKGAAGK (206 aa). Composition is skewed to acidic residues over residues 495 to 518, 529 to 538, and 545 to 581; these read EQEE…EEAG, ESEDSEDESV, and AETD…DEEE. Residues 582 to 592 are compositionally biased toward basic and acidic residues; it reads TARTQHQKELE. The stretch at 609–650 forms a coiled coil; the sequence is AAAKKKSQAKKRAAKKRQEEEELERQKMMMSRKKRKLLEKMM. The span at 612 to 623 shows a compositional bias: basic residues; it reads KKKSQAKKRAAK. Residues 624–635 are compositionally biased toward basic and acidic residues; that stretch reads KRQEEEELERQK.

This sequence belongs to the pescadillo family. As to quaternary structure, component of the NOP7 complex, composed of erb1, nop7 and ytm1. The complex is held together by erb1, which interacts with nop7 via its N-terminal domain and with ytm1 via a high-affinity interaction between the seven-bladed beta-propeller domains of the 2 proteins. The NOP7 complex associates with the 66S pre-ribosome.

It is found in the nucleus. Its subcellular location is the nucleolus. It localises to the nucleoplasm. Its function is as follows. Component of the NOP7 complex, which is required for maturation of the 25S and 5.8S ribosomal RNAs and formation of the 60S ribosome. The chain is Pescadillo homolog (nop7) from Emericella nidulans (strain FGSC A4 / ATCC 38163 / CBS 112.46 / NRRL 194 / M139) (Aspergillus nidulans).